The primary structure comprises 460 residues: Cysteine--tRNA ligase (460 aa).

Cys-29 is a binding site for Zn(2+). The 'HIGH' region motif lies at 31–41 (MTVYDYMHIGH). Residues Cys-210, His-235, and Glu-239 each contribute to the Zn(2+) site. The 'KMSKS' region motif lies at 267 to 271 (KMSKS). Lys-270 contacts ATP.

The protein belongs to the class-I aminoacyl-tRNA synthetase family. Monomer. It depends on Zn(2+) as a cofactor.

The protein resides in the cytoplasm. It carries out the reaction tRNA(Cys) + L-cysteine + ATP = L-cysteinyl-tRNA(Cys) + AMP + diphosphate. The chain is Cysteine--tRNA ligase from Coxiella burnetii (strain RSA 493 / Nine Mile phase I).